A 411-amino-acid chain; its full sequence is Acetylornithine aminotransferase (411 aa).

Pyridoxal 5'-phosphate is bound by residues 107 to 108 (GT) and Phe-141. A N(2)-acetyl-L-ornithine-binding site is contributed by Arg-144. Residue 227 to 230 (DEIQ) coordinates pyridoxal 5'-phosphate. N6-(pyridoxal phosphate)lysine is present on Lys-256. Thr-284 is a N(2)-acetyl-L-ornithine binding site. Thr-285 serves as a coordination point for pyridoxal 5'-phosphate.

Belongs to the class-III pyridoxal-phosphate-dependent aminotransferase family. ArgD subfamily. As to quaternary structure, homodimer. Pyridoxal 5'-phosphate serves as cofactor.

The protein resides in the cytoplasm. It catalyses the reaction N(2)-acetyl-L-ornithine + 2-oxoglutarate = N-acetyl-L-glutamate 5-semialdehyde + L-glutamate. It functions in the pathway amino-acid biosynthesis; L-arginine biosynthesis; N(2)-acetyl-L-ornithine from L-glutamate: step 4/4. The chain is Acetylornithine aminotransferase from Xylella fastidiosa (strain Temecula1 / ATCC 700964).